A 748-amino-acid chain; its full sequence is MEENCDSTENPHSQGRQNATKCGWLRKQGGFVKTWHTRWFVLKGDQLHYFKDEDETKPLGTIFLPGNKVIEHPCNEESPGKFLFEVVPGGERDRMTANHESYLLMASTQNDMEDWVKSIRRVIWGPFGGGIFGQKLEDTVRYEKRYGNRLAPMLVEQCVDFIRQRGLKEEGLFRLPGQANLVKELQDAFDCGEKPSFDSNTDVHTVASLLKLYLRELPEPVVPYAKYEDFLSCATLLSKEEEAGVKELTKQVKSLPVVNYNLLKYICRFLDEVQSYSGVNKMSAQNLATVFGPNILRPKVEDPLTIMEGTVVVQQLMSVMISKHDRLFPKDTEPQSKPQEGPNSNNNDGHKKVTMGQLQNKENNNTKESPVRRCSWDKPESPQRSSMDNGSPTALSGSKTNSPRNSIHKLDVSRSPPLTVKKNPAFNKGSGIVTNGSFSSSNAEGVEKTQTTPNGSLQARRTSSLKSSGTKMGTHSVQNGTVRMGILNTDTLGNSLNGRSMSWLPNGYVTLRDNKQKEPAGESGQHNRLSTYDNVHQQFSLMNLDDKHSVDSATWSTSSCEISLPENSNSCRSSTTTCPEQDFYGGNFEDPVLDGPPQDDLSHPGDYENKSDRRSVGGRSSRATSSSDNSETFVGNTSSNHSALHSLVSSLKQEMTKQKIEYESRIKSLEQRNLTLETEMLNLHDELDQERKKFTMIEIKMRNAERAKEDAEKRNDMLQKEMEQFFSTFGDLTVEPRRSERGNTIWIQ.

Positions 18-124 constitute a PH domain; it reads NATKCGWLRK…WVKSIRRVIW (107 aa). The Rho-GAP domain occupies 134–328; sequence QKLEDTVRYE…VMISKHDRLF (195 aa). The tract at residues 328–476 is disordered; it reads FPKDTEPQSK…SSGTKMGTHS (149 aa). Composition is skewed to polar residues over residues 335-347 and 356-368; these read QSKP…SNNN and GQLQ…NTKE. 8 positions are modified to phosphoserine: Ser369, Ser391, Ser396, Ser398, Ser402, Ser413, Ser415, and Ser437. A compositionally biased stretch (basic and acidic residues) spans 369–381; sequence SPVRRCSWDKPES. Positions 382–405 are enriched in polar residues; that stretch reads PQRSSMDNGSPTALSGSKTNSPRN. Polar residues predominate over residues 432-476; the sequence is IVTNGSFSSSNAEGVEKTQTTPNGSLQARRTSSLKSSGTKMGTHS. Thr452 is subject to Phosphothreonine. Phosphoserine is present on Ser495. The interval 582–640 is disordered; it reads DFYGGNFEDPVLDGPPQDDLSHPGDYENKSDRRSVGGRSSRATSSSDNSETFVGNTSSN. The segment covering 600 to 615 has biased composition (basic and acidic residues); the sequence is DLSHPGDYENKSDRRS. The span at 617–630 shows a compositional bias: low complexity; the sequence is GGRSSRATSSSDNS. Positions 631 to 640 are enriched in polar residues; that stretch reads ETFVGNTSSN. Residues 649–729 are a coiled coil; that stretch reads SSLKQEMTKQ…KEMEQFFSTF (81 aa).

As to quaternary structure, interacts with FLNA. Post-translationally, phosphorylated by ROCK, leading to activate the RacGAP activity.

Its subcellular location is the cytoplasm. It is found in the cytoskeleton. The protein localises to the cell junction. It localises to the adherens junction. The protein resides in the focal adhesion. Its subcellular location is the cell projection. In terms of biological role, rho GTPase-activating protein involved in cell polarity, cell morphology and cytoskeletal organization. Acts as a GTPase activator for the Rac-type GTPase by converting it to an inactive GDP-bound state. Controls actin remodeling by inactivating Rac downstream of Rho leading to suppress leading edge protrusion and promotes cell retraction to achieve cellular polarity. Able to suppress RAC1 and CDC42 activity in vitro. Overexpression induces cell rounding with partial or complete disruption of actin stress fibers and formation of membrane ruffles, lamellipodia, and filopodia. Isoform 2 is a vascular cell-specific GAP involved in modulation of angiogenesis. The chain is Rho GTPase-activating protein 24 (Arhgap24) from Rattus norvegicus (Rat).